Reading from the N-terminus, the 584-residue chain is Endogenous retrovirus group FC1 Env polyprotein (584 aa).

The signal sequence occupies residues 1 to 22; it reads MARPSPLCLLLLLTLLTPIVPS. At 23–518 the chain is on the extracellular side; the sequence is NSLLTEPPFR…GWWQSPLTTW (496 aa). N-linked (GlcNAc...) asparagine glycans are attached at residues N69 and N247. The CXXC motif lies at 251 to 254; it reads CFLC. Residues N272, N276, N308, N313, N322, N334, N342, and N346 are each glycosylated (N-linked (GlcNAc...) asparagine). Residues 384–404 form a fusion peptide region; the sequence is AVFPPLVIGVSLTSSLVASGL. The CKS-17 signature appears at 449–465; it reads MQNRRALDLLTADKGGT. C466 and C473 form a disulfide bridge. Positions 466–474 match the CX6CC motif; it reads CMFLGEECC. An N-linked (GlcNAc...) asparagine glycan is attached at N478. Residues 519 to 539 form a helical membrane-spanning segment; the sequence is IIPFISPILIICLLLLIAPCV. At 540–584 the chain is on the cytoplasmic side; it reads LKFIKNRISEVSRVTVNQMLLHPYSRLPTSEDHYDDALTQQEAAR.

This sequence belongs to the gamma type-C retroviral envelope protein family. HERV class-I F(c)1 env subfamily. In terms of assembly, the surface (SU) and transmembrane (TM) proteins form a heterodimer. SU and TM are attached by noncovalent interactions or by a labile interchain disulfide bond. Post-translationally, specific enzymatic cleavages in vivo yield the mature SU and TM proteins. In terms of processing, the CXXC motif is highly conserved across a broad range of retroviral envelope proteins. It is thought to participate in the formation of a labile disulfide bond possibly with the CX6CC motif present in the transmembrane protein. As to expression, low expression in skin, testis and trachea.

The protein localises to the virion. Its subcellular location is the cell membrane. Retroviral envelope proteins mediate receptor recognition and membrane fusion during early infection. Endogenous envelope proteins may have kept, lost or modified their original function during evolution. This endogenous envelope protein has lost its original fusogenic properties. In terms of biological role, SU mediates receptor recognition. Its function is as follows. TM anchors the envelope heterodimer to the viral membrane through one transmembrane domain. The other hydrophobic domain, called fusion peptide, mediates fusion of the viral membrane with the target cell membrane. The chain is Endogenous retrovirus group FC1 Env polyprotein (ERVFC1) from Homo sapiens (Human).